Consider the following 785-residue polypeptide: Mitochondrial intermediate peptidase (785 aa).

A mitochondrion-targeting transit peptide spans 1–26 (MLKVTTSRPWVCSRCVRRQVQSRRRL). Residues 26 to 51 (LATASTQYRESRPVPVDNSAPGAKRD) form a disordered region. His566 contacts Zn(2+). The active site involves Glu567. Zn(2+)-binding residues include His570 and His573.

This sequence belongs to the peptidase M3 family. The cofactor is Zn(2+).

It localises to the mitochondrion matrix. It carries out the reaction Release of an N-terminal octapeptide as second stage of processing of some proteins imported into the mitochondrion.. Cleaves proteins, imported into the mitochondrion, to their mature size. While most mitochondrial precursor proteins are processed to the mature form in one step by mitochondrial processing peptidase (MPP), the sequential cleavage by MIP of an octapeptide after initial processing by MPP is a required step for a subgroup of nuclear-encoded precursor proteins destined for the matrix or the inner membrane. The chain is Mitochondrial intermediate peptidase (oct1) from Botryotinia fuckeliana (strain B05.10) (Noble rot fungus).